The primary structure comprises 123 residues: Large ribosomal subunit protein bL12 (123 aa).

Belongs to the bacterial ribosomal protein bL12 family. In terms of assembly, homodimer. Part of the ribosomal stalk of the 50S ribosomal subunit. Forms a multimeric L10(L12)X complex, where L10 forms an elongated spine to which 2 to 4 L12 dimers bind in a sequential fashion. Binds GTP-bound translation factors.

In terms of biological role, forms part of the ribosomal stalk which helps the ribosome interact with GTP-bound translation factors. Is thus essential for accurate translation. The polypeptide is Large ribosomal subunit protein bL12 (Pseudoalteromonas atlantica (strain T6c / ATCC BAA-1087)).